The sequence spans 382 residues: Dihydroflavonol 4-reductase (382 aa).

NADP(+)-binding residues include Lys-44 and Tyr-163.

This sequence belongs to the NAD(P)-dependent epimerase/dehydratase family. Dihydroflavonol-4-reductase subfamily.

The catalysed reaction is a (2R,3S,4S)-leucoanthocyanidin + NADP(+) = a (2R,3R)-dihydroflavonol + NADPH + H(+). It catalyses the reaction (2S)-flavan-4-ol + NADP(+) = (2S)-flavanone + NADPH + H(+). It functions in the pathway pigment biosynthesis; anthocyanin biosynthesis. Its function is as follows. Bifunctional enzyme involved in flavonoid metabolism. This Arabidopsis thaliana (Mouse-ear cress) protein is Dihydroflavonol 4-reductase (DFRA).